The following is a 344-amino-acid chain: GTPase Obg (344 aa).

The 159-residue stretch at Met1–Ile159 folds into the Obg domain. Residues Ala160–Glu327 form the OBG-type G domain. Residues Gly166 to Ser173, Phe191 to His195, Asp212 to Gly215, Ser279 to Asp282, and Ser308 to Gln310 contribute to the GTP site. Mg(2+) is bound by residues Ser173 and Thr193.

Belongs to the TRAFAC class OBG-HflX-like GTPase superfamily. OBG GTPase family. As to quaternary structure, monomer. Mg(2+) is required as a cofactor.

Its subcellular location is the cytoplasm. Its function is as follows. An essential GTPase which binds GTP, GDP and possibly (p)ppGpp with moderate affinity, with high nucleotide exchange rates and a fairly low GTP hydrolysis rate. Plays a role in control of the cell cycle, stress response, ribosome biogenesis and in those bacteria that undergo differentiation, in morphogenesis control. The chain is GTPase Obg from Xanthobacter autotrophicus (strain ATCC BAA-1158 / Py2).